We begin with the raw amino-acid sequence, 295 residues long: Glutamate 5-kinase (295 aa).

An ATP-binding site is contributed by Lys9. Positions 49, 136, and 148 each coordinate substrate. Residues 168–169 and 210–216 each bind ATP; these read TD and TGGMLTK.

It belongs to the glutamate 5-kinase family.

Its subcellular location is the cytoplasm. It catalyses the reaction L-glutamate + ATP = L-glutamyl 5-phosphate + ADP. It functions in the pathway amino-acid biosynthesis; L-proline biosynthesis; L-glutamate 5-semialdehyde from L-glutamate: step 1/2. In terms of biological role, catalyzes the transfer of a phosphate group to glutamate to form L-glutamate 5-phosphate. The chain is Glutamate 5-kinase from Neisseria gonorrhoeae (strain NCCP11945).